The following is a 249-amino-acid chain: Zinc finger protein CG30 (249 aa).

The RING-type zinc finger occupies 8-66; it reads CHICCSVGEIKNYFLQPVDAITILPIVELHTCRHQLCVMCVRKIAQRGRDKRVECPMCR.

The chain is Zinc finger protein CG30 (CG30) from Orgyia pseudotsugata (Douglas-fir tussock moth).